A 151-amino-acid chain; its full sequence is Nucleoside diphosphate kinase (151 aa).

Positions 11, 59, 87, 93, 104, and 114 each coordinate ATP. Catalysis depends on His-117, which acts as the Pros-phosphohistidine intermediate.

It belongs to the NDK family. Homotetramer. Requires Mg(2+) as cofactor.

It localises to the cytoplasm. The enzyme catalyses a 2'-deoxyribonucleoside 5'-diphosphate + ATP = a 2'-deoxyribonucleoside 5'-triphosphate + ADP. It catalyses the reaction a ribonucleoside 5'-diphosphate + ATP = a ribonucleoside 5'-triphosphate + ADP. Its function is as follows. Major role in the synthesis of nucleoside triphosphates other than ATP. The ATP gamma phosphate is transferred to the NDP beta phosphate via a ping-pong mechanism, using a phosphorylated active-site intermediate. This is Nucleoside diphosphate kinase from Prochlorococcus marinus (strain NATL2A).